A 94-amino-acid chain; its full sequence is Small ribosomal subunit protein uS19 (94 aa).

The protein belongs to the universal ribosomal protein uS19 family.

Functionally, protein S19 forms a complex with S13 that binds strongly to the 16S ribosomal RNA. This Moorella thermoacetica (strain ATCC 39073 / JCM 9320) protein is Small ribosomal subunit protein uS19.